The primary structure comprises 373 residues: Histidinol-phosphate aminotransferase (373 aa).

A compositionally biased stretch (polar residues) spans 1 to 10; it reads MTGVPGSSIT. Residues 1–45 are disordered; that stretch reads MTGVPGSSITLDDLPLRDDLRGKSPYGAPQLSVPVRLNTNENPHP. At Lys-237 the chain carries N6-(pyridoxal phosphate)lysine.

The protein belongs to the class-II pyridoxal-phosphate-dependent aminotransferase family. Histidinol-phosphate aminotransferase subfamily. As to quaternary structure, homodimer. Pyridoxal 5'-phosphate serves as cofactor.

The enzyme catalyses L-histidinol phosphate + 2-oxoglutarate = 3-(imidazol-4-yl)-2-oxopropyl phosphate + L-glutamate. The protein operates within amino-acid biosynthesis; L-histidine biosynthesis; L-histidine from 5-phospho-alpha-D-ribose 1-diphosphate: step 7/9. The sequence is that of Histidinol-phosphate aminotransferase from Mycolicibacterium vanbaalenii (strain DSM 7251 / JCM 13017 / BCRC 16820 / KCTC 9966 / NRRL B-24157 / PYR-1) (Mycobacterium vanbaalenii).